The chain runs to 365 residues: Eukaryotic translation initiation factor 3 subunit H (365 aa).

An MPN domain is found at 11–160 (VKVDALVVMK…LRAFRLSSKF (150 aa)).

Belongs to the eIF-3 subunit H family. In terms of assembly, component of the eukaryotic translation initiation factor 3 (eIF-3) complex.

The protein localises to the cytoplasm. Functionally, component of the eukaryotic translation initiation factor 3 (eIF-3) complex, which is involved in protein synthesis of a specialized repertoire of mRNAs and, together with other initiation factors, stimulates binding of mRNA and methionyl-tRNAi to the 40S ribosome. The eIF-3 complex specifically targets and initiates translation of a subset of mRNAs involved in cell proliferation. This is Eukaryotic translation initiation factor 3 subunit H from Aspergillus oryzae (strain ATCC 42149 / RIB 40) (Yellow koji mold).